The sequence spans 213 residues: Imidazole glycerol phosphate synthase subunit HisH 1 (213 aa).

The 210-residue stretch at 4–213 (TVAVIDYGMG…QNFVAWDGRW (210 aa)) folds into the Glutamine amidotransferase type-1 domain. Cysteine 82 acts as the Nucleophile in catalysis. Catalysis depends on residues histidine 191 and glutamate 193.

Heterodimer of HisH and HisF.

It is found in the cytoplasm. The catalysed reaction is 5-[(5-phospho-1-deoxy-D-ribulos-1-ylimino)methylamino]-1-(5-phospho-beta-D-ribosyl)imidazole-4-carboxamide + L-glutamine = D-erythro-1-(imidazol-4-yl)glycerol 3-phosphate + 5-amino-1-(5-phospho-beta-D-ribosyl)imidazole-4-carboxamide + L-glutamate + H(+). It catalyses the reaction L-glutamine + H2O = L-glutamate + NH4(+). Its pathway is amino-acid biosynthesis; L-histidine biosynthesis; L-histidine from 5-phospho-alpha-D-ribose 1-diphosphate: step 5/9. In terms of biological role, IGPS catalyzes the conversion of PRFAR and glutamine to IGP, AICAR and glutamate. The HisH subunit provides the glutamine amidotransferase activity that produces the ammonia necessary to HisF for the synthesis of IGP and AICAR. The polypeptide is Imidazole glycerol phosphate synthase subunit HisH 1 (hisH1) (Pseudomonas aeruginosa (strain ATCC 15692 / DSM 22644 / CIP 104116 / JCM 14847 / LMG 12228 / 1C / PRS 101 / PAO1)).